A 233-amino-acid polypeptide reads, in one-letter code: Leucyl/phenylalanyl-tRNA--protein transferase (233 aa).

The protein belongs to the L/F-transferase family.

The protein localises to the cytoplasm. It catalyses the reaction N-terminal L-lysyl-[protein] + L-leucyl-tRNA(Leu) = N-terminal L-leucyl-L-lysyl-[protein] + tRNA(Leu) + H(+). The catalysed reaction is N-terminal L-arginyl-[protein] + L-leucyl-tRNA(Leu) = N-terminal L-leucyl-L-arginyl-[protein] + tRNA(Leu) + H(+). The enzyme catalyses L-phenylalanyl-tRNA(Phe) + an N-terminal L-alpha-aminoacyl-[protein] = an N-terminal L-phenylalanyl-L-alpha-aminoacyl-[protein] + tRNA(Phe). Functions in the N-end rule pathway of protein degradation where it conjugates Leu, Phe and, less efficiently, Met from aminoacyl-tRNAs to the N-termini of proteins containing an N-terminal arginine or lysine. This Anaeromyxobacter dehalogenans (strain 2CP-1 / ATCC BAA-258) protein is Leucyl/phenylalanyl-tRNA--protein transferase.